A 163-amino-acid chain; its full sequence is MKQKIVEPYAQALFRLKDDIDLTPLWEMARDSKFMQLLMNPSIPKEKKWQLFQPFDKLVQSWLEVIWKKKRMNLLAEICASYLELRKKKEGIVTVFVTSATPLTDTQTQQLEVQLTRMCQAKHLQCEYQVDAQLLAGLKIQMNGQLIDTSWQTQLKQLMKSLW.

Belongs to the ATPase delta chain family. In terms of assembly, F-type ATPases have 2 components, F(1) - the catalytic core - and F(0) - the membrane proton channel. F(1) has five subunits: alpha(3), beta(3), gamma(1), delta(1), epsilon(1). CF(0) has four main subunits: a(1), b(1), b'(1) and c(10-14). The alpha and beta chains form an alternating ring which encloses part of the gamma chain. F(1) is attached to F(0) by a central stalk formed by the gamma and epsilon chains, while a peripheral stalk is formed by the delta, b and b' chains.

The protein localises to the plastid. Its subcellular location is the chloroplast thylakoid membrane. Functionally, f(1)F(0) ATP synthase produces ATP from ADP in the presence of a proton or sodium gradient. F-type ATPases consist of two structural domains, F(1) containing the extramembraneous catalytic core and F(0) containing the membrane proton channel, linked together by a central stalk and a peripheral stalk. During catalysis, ATP synthesis in the catalytic domain of F(1) is coupled via a rotary mechanism of the central stalk subunits to proton translocation. In terms of biological role, this protein is part of the stalk that links CF(0) to CF(1). It either transmits conformational changes from CF(0) to CF(1) or is implicated in proton conduction. The sequence is that of ATP synthase subunit delta, chloroplastic from Cyanidioschyzon merolae (strain NIES-3377 / 10D) (Unicellular red alga).